The chain runs to 250 residues: 5-oxoprolinase subunit A (250 aa).

This sequence belongs to the LamB/PxpA family. As to quaternary structure, forms a complex composed of PxpA, PxpB and PxpC.

It catalyses the reaction 5-oxo-L-proline + ATP + 2 H2O = L-glutamate + ADP + phosphate + H(+). In terms of biological role, catalyzes the cleavage of 5-oxoproline to form L-glutamate coupled to the hydrolysis of ATP to ADP and inorganic phosphate. This Pseudomonas fluorescens (strain ATCC BAA-477 / NRRL B-23932 / Pf-5) protein is 5-oxoprolinase subunit A.